The following is a 121-amino-acid chain: Large ribosomal subunit protein uL14 (121 aa).

It belongs to the universal ribosomal protein uL14 family. In terms of assembly, part of the 50S ribosomal subunit. Forms a cluster with proteins L3 and L19. In the 70S ribosome, L14 and L19 interact and together make contacts with the 16S rRNA in bridges B5 and B8.

Functionally, binds to 23S rRNA. Forms part of two intersubunit bridges in the 70S ribosome. In Pseudoalteromonas atlantica (strain T6c / ATCC BAA-1087), this protein is Large ribosomal subunit protein uL14.